Reading from the N-terminus, the 101-residue chain is uncharacterized protein (101 aa).

Helical transmembrane passes span 10-32 (FLPN…FFLY), 45-67 (LGIW…LPLI), and 77-99 (IAFT…ILSH).

The protein resides in the cell membrane. This is an uncharacterized protein from Bacillus subtilis (strain 168).